We begin with the raw amino-acid sequence, 258 residues long: Alpha-fibrinogenase-like (258 aa).

The N-terminal stretch at 1-18 is a signal peptide; that stretch reads MVLIRVLANLLVLQLSYA. Positions 19–24 are excised as a propeptide; it reads QKSSEL. A Peptidase S1 domain is found at 25–249; it reads VVGGHPCNIY…YTDWIHSIIA (225 aa). 6 cysteine pairs are disulfide-bonded: Cys31/Cys163, Cys50/Cys66, Cys98/Cys256, Cys142/Cys210, Cys174/Cys189, and Cys200/Cys225. An N-linked (GlcNAc...) asparagine glycan is attached at Asn44. Catalysis depends on charge relay system residues His65 and Asp110. Catalysis depends on Ser204, which acts as the Charge relay system.

Belongs to the peptidase S1 family. Snake venom subfamily. In terms of assembly, monomer. In terms of tissue distribution, expressed by the venom gland.

The protein resides in the secreted. Its function is as follows. Degrades alpha chain of fibrinogen (FGA), and has strong caseinolytic activity. Cleaves oxidized insulin B-chain at '40-Tyr-|-Leu-41', '48-Phe-|-Phe-49' and '49-Phe-|-Tyr-50', and glucagon at the bonds '62-Tyr-|-Ser-63', 66-Leu-|-Asp-67' and '78-Leu-|-Met-79' bonds. This Daboia siamensis (Eastern Russel's viper) protein is Alpha-fibrinogenase-like.